A 218-amino-acid polypeptide reads, in one-letter code: Pyridoxine/pyridoxamine 5'-phosphate oxidase (218 aa).

Residues 14 to 17 (RREY) and lysine 72 each bind substrate. Residues 67–72 (RIVLLK), 82–83 (YT), arginine 88, lysine 89, and glutamine 111 contribute to the FMN site. Residues tyrosine 129, arginine 133, and serine 137 each contribute to the substrate site. Residues 146 to 147 (QS) and tryptophan 191 each bind FMN. Position 197-199 (197-199 (RLH)) interacts with substrate. Arginine 201 lines the FMN pocket.

Belongs to the pyridoxamine 5'-phosphate oxidase family. In terms of assembly, homodimer. Requires FMN as cofactor.

It carries out the reaction pyridoxamine 5'-phosphate + O2 + H2O = pyridoxal 5'-phosphate + H2O2 + NH4(+). It catalyses the reaction pyridoxine 5'-phosphate + O2 = pyridoxal 5'-phosphate + H2O2. The protein operates within cofactor metabolism; pyridoxal 5'-phosphate salvage; pyridoxal 5'-phosphate from pyridoxamine 5'-phosphate: step 1/1. It functions in the pathway cofactor metabolism; pyridoxal 5'-phosphate salvage; pyridoxal 5'-phosphate from pyridoxine 5'-phosphate: step 1/1. Functionally, catalyzes the oxidation of either pyridoxine 5'-phosphate (PNP) or pyridoxamine 5'-phosphate (PMP) into pyridoxal 5'-phosphate (PLP). This is Pyridoxine/pyridoxamine 5'-phosphate oxidase from Salmonella paratyphi B (strain ATCC BAA-1250 / SPB7).